An 855-amino-acid polypeptide reads, in one-letter code: DNA polymerase (855 aa).

A 3'-5' exonuclease domain is found at 107-332 (KPEMKPVFDA…LHNFFLPKIE (226 aa)). Residues 333-833 (KNEKLCSLYY…MDKEHPDHSK (501 aa)) are polymerase.

The protein belongs to the DNA polymerase type-A family. As to quaternary structure, single-chain monomer with multiple functions.

It carries out the reaction DNA(n) + a 2'-deoxyribonucleoside 5'-triphosphate = DNA(n+1) + diphosphate. Functionally, replicates the viral genomic DNA. This polymerase possesses two enzymatic activities: DNA synthesis (polymerase) and an exonucleolytic activity that degrades single-stranded DNA in the 3'-5' direction for proofreading purpose. The DNA synthesis very likely occurs by strand displacement. In Escherichia phage T5 (Enterobacteria phage T5), this protein is DNA polymerase.